We begin with the raw amino-acid sequence, 189 residues long: GTP cyclohydrolase 1 (189 aa).

Residues Cys79, His82, and Cys150 each coordinate Zn(2+).

The protein belongs to the GTP cyclohydrolase I family. In terms of assembly, homomer.

The catalysed reaction is GTP + H2O = 7,8-dihydroneopterin 3'-triphosphate + formate + H(+). Its pathway is cofactor biosynthesis; 7,8-dihydroneopterin triphosphate biosynthesis; 7,8-dihydroneopterin triphosphate from GTP: step 1/1. This Rickettsia peacockii (strain Rustic) protein is GTP cyclohydrolase 1.